A 168-amino-acid polypeptide reads, in one-letter code: Large ribosomal subunit protein uL10 (168 aa).

This sequence belongs to the universal ribosomal protein uL10 family. As to quaternary structure, part of the ribosomal stalk of the 50S ribosomal subunit. The N-terminus interacts with L11 and the large rRNA to form the base of the stalk. The C-terminus forms an elongated spine to which L12 dimers bind in a sequential fashion forming a multimeric L10(L12)X complex.

Its function is as follows. Forms part of the ribosomal stalk, playing a central role in the interaction of the ribosome with GTP-bound translation factors. The sequence is that of Large ribosomal subunit protein uL10 from Pediococcus pentosaceus (strain ATCC 25745 / CCUG 21536 / LMG 10740 / 183-1w).